The sequence spans 260 residues: Putative ABC transporter ATP-binding protein PH0132 (260 aa).

Residues Ile-2–Pro-234 enclose the ABC transporter domain. Gly-34–Thr-41 contributes to the ATP binding site.

Belongs to the ABC transporter superfamily.

The protein resides in the cell membrane. Probably part of an ABC transporter complex. Responsible for energy coupling to the transport system. This Pyrococcus horikoshii (strain ATCC 700860 / DSM 12428 / JCM 9974 / NBRC 100139 / OT-3) protein is Putative ABC transporter ATP-binding protein PH0132.